Consider the following 1031-residue polypeptide: GTPase-activating protein DDB_G0291510 (1031 aa).

A disordered region spans residues 18–48 (VEKGDIDENNSGSINNRPLSPTLFSSNSSNN). Polar residues predominate over residues 26-41 (NNSGSINNRPLSPTLF). In terms of domain architecture, Rap-GAP spans 186–404 (FKDLEQTQTE…RTFKDQLESI (219 aa)). Positions 471-881 (NEKINCLDVV…LSNDDCNLDN (411 aa)) constitute a CNH domain. The disordered stretch occupies residues 920-950 (NNNYNNNGNNSNGGNNNNNNNNNNGCNNSLI).

In Dictyostelium discoideum (Social amoeba), this protein is GTPase-activating protein DDB_G0291510.